The primary structure comprises 537 residues: Ataxin-10 homolog (537 aa).

The protein belongs to the ataxin-10 family.

The protein resides in the cytoplasm. Functionally, may play a role in the regulation of cytokinesis. The chain is Ataxin-10 homolog (CTR86) from Kluyveromyces lactis (strain ATCC 8585 / CBS 2359 / DSM 70799 / NBRC 1267 / NRRL Y-1140 / WM37) (Yeast).